Reading from the N-terminus, the 349-residue chain is uncharacterized protein (349 aa).

Residues 1-16 form the signal peptide; it reads MLFKISFLALIASALA. Residues 17–326 are Lumenal-facing; sequence MSINSPTNGD…SSSSSSSAAS (310 aa). Disordered stretches follow at residues 115-190 and 243-322; these read ASSS…SSYR and TNGT…SSSS. 3 stretches are compositionally biased toward low complexity: residues 116-176, 243-278, and 289-322; these read SSSS…SSRT, TNGTNSTNSTSTTSHSLTKLPTSSKSLTTSKTTASG, and STNDTTNTTDDATNTTSDSSSSSSASASSSSSSS. A helical transmembrane segment spans residues 327–347; that stretch reads LVSQPVGISAVIAFFAVALSL. The Cytoplasmic portion of the chain corresponds to 348 to 349; it reads TL.

It is found in the endoplasmic reticulum membrane. This is an uncharacterized protein from Schizosaccharomyces pombe (strain 972 / ATCC 24843) (Fission yeast).